The chain runs to 122 residues: Large ribosomal subunit protein uL14 (122 aa).

It belongs to the universal ribosomal protein uL14 family. In terms of assembly, part of the 50S ribosomal subunit. Forms a cluster with proteins L3 and L19. In the 70S ribosome, L14 and L19 interact and together make contacts with the 16S rRNA in bridges B5 and B8.

Functionally, binds to 23S rRNA. Forms part of two intersubunit bridges in the 70S ribosome. The chain is Large ribosomal subunit protein uL14 from Chlorobium chlorochromatii (strain CaD3).